Consider the following 274-residue polypeptide: MRSNNNNPLTRDEILSRYFPQYRPAVAASQGLSGGSCIIAHDTHRVVLRRHHDPDAPPAHFLRHYRALSQLPASLAPRALFYTPGWMAVEYLHGVVNSALPDADELAALLYHLHQQPRFGWRIALSPLLAQYWSCCDPARRTPFWLRRLKQLQKNGEPRPLRLAPLHMDVHGDNIVLTSAGLRLIDWEYAGDGDIALELAAVWVEDERQHRQLANAYAACARIDARQLWRQIRLWHPWVIMLKAGWFEYRWRQTGEQQFIRLADETWRQLRMKG.

The protein belongs to the thiamine kinase family.

The enzyme catalyses thiamine + ATP = thiamine phosphate + ADP + H(+). It functions in the pathway cofactor biosynthesis; thiamine diphosphate biosynthesis; thiamine phosphate from thiamine: step 1/1. Functionally, catalyzes the ATP-dependent phosphorylation of thiamine to thiamine phosphate. Is involved in thiamine salvage. This is Thiamine kinase from Salmonella choleraesuis (strain SC-B67).